A 75-amino-acid polypeptide reads, in one-letter code: Phi-liotoxin-Lw1a (75 aa).

A signal peptide spans 1–25 (MNFATKVSLLLLAIAVIVIVEGGEG). A propeptide spanning residues 26-39 (DSWFEEHEESDTER) is cleaved from the precursor. Disulfide bonds link Cys-50–Cys-62 and Cys-56–Cys-68.

In terms of tissue distribution, expressed by the venom gland.

The protein resides in the secreted. Its function is as follows. Affects the activity of both ryanodine-sensitive calcium-release channels RyR1 and RyR2 with high potency. At lower concentrations the toxin increases full openings of the RyRs, and at higher concentrations it inhibits full openings and induce openings to subconductance levels and reduces the number of full conductance openings. The different actions may be attributed to the toxins binding at different sites on the RyRs, with binding at a high-affinity site mediating the increase in full openings and the induction of subconductance states evoked upon binding to a lower-affinity site. Insect-selective toxin that provokes a dose-dependent contractile paralysis in crickets and blowfly larvae, followed by death. The chain is Phi-liotoxin-Lw1a from Hormurus waigiensis (Australian rainforest scorpion).